The primary structure comprises 31 residues: Photosystem II reaction center protein T (31 aa).

The helical transmembrane segment at 3–23 (SFAYILILGLAIATLFFAIAF) threads the bilayer.

It belongs to the PsbT family. As to quaternary structure, PSII is composed of 1 copy each of membrane proteins PsbA, PsbB, PsbC, PsbD, PsbE, PsbF, PsbH, PsbI, PsbJ, PsbK, PsbL, PsbM, PsbT, PsbX, PsbY, PsbZ, Psb30/Ycf12, peripheral proteins PsbO, CyanoQ (PsbQ), PsbU, PsbV and a large number of cofactors. It forms dimeric complexes.

It is found in the cellular thylakoid membrane. Found at the monomer-monomer interface of the photosystem II (PS II) dimer, plays a role in assembly and dimerization of PSII. PSII is a light-driven water plastoquinone oxidoreductase, using light energy to abstract electrons from H(2)O, generating a proton gradient subsequently used for ATP formation. The chain is Photosystem II reaction center protein T from Synechococcus sp. (strain CC9311).